A 158-amino-acid polypeptide reads, in one-letter code: MKLISNDLRDGDKLPHRHVFNGMGYDGDNISPHLAWDDVPAGTKSFVVTCYDPDAPTGSGWWHWVVVNLPADTRVLPQGFGSGLVAMPDGVLQTRTDFGKTGYDGAAPPKGETHRYIFTVHALDIERIDVDEGASGAMVGFNVHFHSLASASITAMFS.

Belongs to the UPF0098 family. As to quaternary structure, homodimer.

Its subcellular location is the cytoplasm. This chain is UPF0098 protein YbhB (ybhB), found in Escherichia coli (strain K12).